Here is an 89-residue protein sequence, read N- to C-terminus: Sec-independent protein translocase protein TatA (89 aa).

The chain crosses the membrane as a helical span at residues 1-21; sequence MGGISIWQLLIIALIVVLLFG. Basic and acidic residues predominate over residues 47–61; sequence EEKKALEENATDKPA. The disordered stretch occupies residues 47 to 89; it reads EEKKALEENATDKPAADTAKVTETAKVAETAEKKAESKGKEQA. A compositionally biased stretch (low complexity) spans 62–74; it reads ADTAKVTETAKVA. The segment covering 75-89 has biased composition (basic and acidic residues); it reads ETAEKKAESKGKEQA.

The protein belongs to the TatA/E family. As to quaternary structure, the Tat system comprises two distinct complexes: a TatABC complex, containing multiple copies of TatA, TatB and TatC subunits, and a separate TatA complex, containing only TatA subunits. Substrates initially bind to the TatABC complex, which probably triggers association of the separate TatA complex to form the active translocon.

It localises to the cell inner membrane. Its function is as follows. Part of the twin-arginine translocation (Tat) system that transports large folded proteins containing a characteristic twin-arginine motif in their signal peptide across membranes. TatA could form the protein-conducting channel of the Tat system. This is Sec-independent protein translocase protein TatA from Shewanella pealeana (strain ATCC 700345 / ANG-SQ1).